Here is a 500-residue protein sequence, read N- to C-terminus: L-aspartate semialdehyde sulfurtransferase (500 aa).

The active-site Cysteine persulfide intermediate is the cysteine 131. 2 CBS domains span residues 384-441 and 446-500; these read MADF…IFDS and MTKK…ARRY.

Belongs to the L-aspartate semialdehyde sulfurtransferase family. Forms homodimers. May form a complex with MA_1822.

The catalysed reaction is L-aspartate 4-semialdehyde + reduced 2[4Fe-4S]-[ferredoxin] + hydrogen sulfide + 3 H(+) = oxidized 2[4Fe-4S]-[ferredoxin] + L-homocysteine + H2O. It participates in amino-acid biosynthesis. In terms of biological role, required for O-acetylhomoserine sulfhydrylase (OAHS)-independent homocysteine (Hcy) biosynthesis. Together with MA_1822, catalyzes the condensation of sulfide with aspartate semialdehyde to generate homocysteine. Likely functions through persulfide intermediate. This is L-aspartate semialdehyde sulfurtransferase from Methanosarcina acetivorans (strain ATCC 35395 / DSM 2834 / JCM 12185 / C2A).